Reading from the N-terminus, the 152-residue chain is Transcriptional regulator MraZ (152 aa).

SpoVT-AbrB domains follow at residues 5–52 (ATLV…PLPE) and 81–124 (ASEC…DETT).

This sequence belongs to the MraZ family. In terms of assembly, forms oligomers.

The protein localises to the cytoplasm. It is found in the nucleoid. Negatively regulates its own expression and that of the subsequent genes in the proximal part of the division and cell wall (dcw) gene cluster. Acts by binding directly to DNA. May also regulate the expression of genes outside the dcw cluster. This Salmonella paratyphi A (strain ATCC 9150 / SARB42) protein is Transcriptional regulator MraZ.